A 124-amino-acid chain; its full sequence is Small ribosomal subunit protein uS12 (124 aa).

The segment at 9–28 (RTERQTLSRKTKSPALRSCP) is disordered. Asp-89 carries the 3-methylthioaspartic acid modification. The interval 104-124 (TAGVKDRRQSRSKYGAKAPKE) is disordered.

Belongs to the universal ribosomal protein uS12 family. As to quaternary structure, part of the 30S ribosomal subunit. Contacts proteins S8 and S17. May interact with IF1 in the 30S initiation complex.

Functionally, with S4 and S5 plays an important role in translational accuracy. In terms of biological role, interacts with and stabilizes bases of the 16S rRNA that are involved in tRNA selection in the A site and with the mRNA backbone. Located at the interface of the 30S and 50S subunits, it traverses the body of the 30S subunit contacting proteins on the other side and probably holding the rRNA structure together. The combined cluster of proteins S8, S12 and S17 appears to hold together the shoulder and platform of the 30S subunit. The protein is Small ribosomal subunit protein uS12 of Synechococcus sp. (strain RCC307).